A 55-amino-acid polypeptide reads, in one-letter code: UPF0391 membrane protein Tbd_2772 (55 aa).

2 consecutive transmembrane segments (helical) span residues 1 to 21 (MFGW…FGFA) and 28 to 48 (AWIA…MLVM).

This sequence belongs to the UPF0391 family.

The protein localises to the cell membrane. The protein is UPF0391 membrane protein Tbd_2772 of Thiobacillus denitrificans (strain ATCC 25259 / T1).